We begin with the raw amino-acid sequence, 177 residues long: Small ribosomal subunit protein uS4 (177 aa).

An S4 RNA-binding domain is found at 104-166; it reads RRLQTIVYKK…PTSPFKQHPP (63 aa). Residues 158–177 form a disordered region; it reads TSPFKQHPPTQQGEENVQQA. Over residues 165–177 the composition is skewed to polar residues; that stretch reads PPTQQGEENVQQA.

It belongs to the universal ribosomal protein uS4 family. As to quaternary structure, part of the 30S ribosomal subunit. Contacts protein S5. The interaction surface between S4 and S5 is involved in control of translational fidelity.

One of the primary rRNA binding proteins, it binds directly to 16S rRNA where it nucleates assembly of the body of the 30S subunit. Its function is as follows. With S5 and S12 plays an important role in translational accuracy. The polypeptide is Small ribosomal subunit protein uS4 (Sulfurisphaera tokodaii (strain DSM 16993 / JCM 10545 / NBRC 100140 / 7) (Sulfolobus tokodaii)).